Reading from the N-terminus, the 664-residue chain is uncharacterized protein (664 aa).

Positions 1–25 are cleaved as a signal peptide; the sequence is MSWKRYLKWVSFAIIPLLFANTSIK. Residues 625–645 form a helical membrane-spanning segment; the sequence is IIVYLIIGFSVLVLFITVFIY.

It belongs to the MG414/MG415 family.

The protein localises to the cell membrane. This is an uncharacterized protein from Mycoplasma genitalium (strain ATCC 33530 / DSM 19775 / NCTC 10195 / G37) (Mycoplasmoides genitalium).